Reading from the N-terminus, the 312-residue chain is Ribonuclease Z (312 aa).

7 residues coordinate Zn(2+): His-63, His-65, Asp-67, His-68, His-141, Asp-212, and His-270. The Proton acceptor role is filled by Asp-67.

Belongs to the RNase Z family. As to quaternary structure, homodimer. Zn(2+) serves as cofactor.

The enzyme catalyses Endonucleolytic cleavage of RNA, removing extra 3' nucleotides from tRNA precursor, generating 3' termini of tRNAs. A 3'-hydroxy group is left at the tRNA terminus and a 5'-phosphoryl group is left at the trailer molecule.. In terms of biological role, zinc phosphodiesterase, which displays some tRNA 3'-processing endonuclease activity. Probably involved in tRNA maturation, by removing a 3'-trailer from precursor tRNA. In Latilactobacillus sakei subsp. sakei (strain 23K) (Lactobacillus sakei subsp. sakei), this protein is Ribonuclease Z.